Consider the following 84-residue polypeptide: Cell division protein CrgA (84 aa).

2 helical membrane-spanning segments follow: residues 31-51 and 60-80; these read VAPVMLAMFLIGLAWIVVFYV and ALDNWNIVVGFGFIAAGFGVS.

Belongs to the CrgA family.

Its subcellular location is the cell membrane. Involved in cell division. Coordinates growth and cell division. Required for the formation of the sporulation septa. The polypeptide is Cell division protein CrgA (Streptomyces avermitilis (strain ATCC 31267 / DSM 46492 / JCM 5070 / NBRC 14893 / NCIMB 12804 / NRRL 8165 / MA-4680)).